The following is a 259-amino-acid chain: Tryptophan synthase alpha chain (259 aa).

Residues Glu35 and Asp46 each act as proton acceptor in the active site.

This sequence belongs to the TrpA family. Tetramer of two alpha and two beta chains.

The enzyme catalyses (1S,2R)-1-C-(indol-3-yl)glycerol 3-phosphate + L-serine = D-glyceraldehyde 3-phosphate + L-tryptophan + H2O. It participates in amino-acid biosynthesis; L-tryptophan biosynthesis; L-tryptophan from chorismate: step 5/5. Its function is as follows. The alpha subunit is responsible for the aldol cleavage of indoleglycerol phosphate to indole and glyceraldehyde 3-phosphate. The protein is Tryptophan synthase alpha chain of Methanococcus vannielii (strain ATCC 35089 / DSM 1224 / JCM 13029 / OCM 148 / SB).